The following is a 435-amino-acid chain: E3 ubiquitin-protein ligase PUB22 (435 aa).

Positions 6 to 81 (EIPSFFLCPI…QSWCTLNASY (76 aa)) constitute a U-box domain.

In terms of assembly, interacts with RPN12A. Binds to EXO70B2. Auto-ubiquitinated leading to degradation via the 26S proteasome. This Auto-ubiquitination is repressed by the bacterial elicitor flg22 thus leading to a transiently increased protein stabilization and accumulation.

It localises to the cytoplasm. The catalysed reaction is S-ubiquitinyl-[E2 ubiquitin-conjugating enzyme]-L-cysteine + [acceptor protein]-L-lysine = [E2 ubiquitin-conjugating enzyme]-L-cysteine + N(6)-ubiquitinyl-[acceptor protein]-L-lysine.. It functions in the pathway protein modification; protein ubiquitination. In terms of biological role, E3 ubiquitin-protein ligase that negatively regulates water stress response. May control in coordination with PUB23 a drought signaling pathway by ubiquitinating cytosolic RPN12a. Acts as a negative regulator of the immunity triggered by the pathogen-associated molecular patterns (PAMPs), in association with PUB23 and PUB24. Regulates EXO70B2 ubiquitination and degradation via the 26S proteasome to attenuate PAMP-induced signaling. This Arabidopsis thaliana (Mouse-ear cress) protein is E3 ubiquitin-protein ligase PUB22.